The sequence spans 104 residues: Large ribosomal subunit protein uL24 (104 aa).

A compositionally biased stretch (basic and acidic residues) spans 85–96 (IKRELGAKEKAR). A disordered region spans residues 85-104 (IKRELGAKEKARADRRKTAK).

Belongs to the universal ribosomal protein uL24 family. In terms of assembly, part of the 50S ribosomal subunit.

In terms of biological role, one of two assembly initiator proteins, it binds directly to the 5'-end of the 23S rRNA, where it nucleates assembly of the 50S subunit. Its function is as follows. One of the proteins that surrounds the polypeptide exit tunnel on the outside of the subunit. This is Large ribosomal subunit protein uL24 from Anaeromyxobacter sp. (strain Fw109-5).